Reading from the N-terminus, the 165-residue chain is Neurotrophin-3 (165 aa).

The N-terminal stretch at 1–3 (IQS) is a signal peptide. A propeptide spanning residues 4-119 (TSMDQGSLSE…VLTXTSXXXR (116 aa)) is cleaved from the precursor.

It belongs to the NGF-beta family.

It localises to the secreted. Functionally, seems to promote the survival of visceral and proprioceptive sensory neurons. This is Neurotrophin-3 (NTF3) from Tropidophis haetianus (Haitian dwarf boa).